The primary structure comprises 265 residues: Probable S-methyl-5'-thioinosine phosphorylase (265 aa).

Residues S15 and 55 to 56 (RH) each bind phosphate. M187 is a binding site for substrate. T188 is a phosphate binding site. Substrate is bound at residue 211–213 (NYA).

It belongs to the PNP/MTAP phosphorylase family. MTAP subfamily. In terms of assembly, homotrimer.

The enzyme catalyses S-methyl-5'-thioinosine + phosphate = 5-(methylsulfanyl)-alpha-D-ribose 1-phosphate + hypoxanthine. It functions in the pathway purine metabolism; purine nucleoside salvage. Functionally, catalyzes the reversible phosphorylation of S-methyl-5'-thioinosine (MTI) to hypoxanthine and 5-methylthioribose-1-phosphate. Involved in the breakdown of S-methyl-5'-thioadenosine (MTA), a major by-product of polyamine biosynthesis. Catabolism of (MTA) occurs via deamination to MTI and phosphorolysis to hypoxanthine. The protein is Probable S-methyl-5'-thioinosine phosphorylase of Thermodesulfovibrio yellowstonii (strain ATCC 51303 / DSM 11347 / YP87).